The chain runs to 322 residues: Ferredoxin--NADP reductase (322 aa).

Positions 87, 119, 279, and 320 each coordinate FAD.

The protein belongs to the ferredoxin--NADP reductase type 2 family. As to quaternary structure, homodimer. The cofactor is FAD.

It catalyses the reaction 2 reduced [2Fe-2S]-[ferredoxin] + NADP(+) + H(+) = 2 oxidized [2Fe-2S]-[ferredoxin] + NADPH. This is Ferredoxin--NADP reductase from Streptococcus suis (strain 98HAH33).